The primary structure comprises 512 residues: Maturase K (512 aa).

This sequence belongs to the intron maturase 2 family. MatK subfamily.

The protein resides in the plastid. Its subcellular location is the chloroplast. Its function is as follows. Usually encoded in the trnK tRNA gene intron. Probably assists in splicing its own and other chloroplast group II introns. This Lemna minor (Common duckweed) protein is Maturase K.